The primary structure comprises 614 residues: UvrABC system protein C (614 aa).

In terms of domain architecture, GIY-YIG spans 25 to 103 (SVPGVYKMFG…IKSLKPKYNI (79 aa)). The UVR domain maps to 214–249 (KEIQCELFEMMCRFSNNQDYESAIVCRDRLHALKSM).

Belongs to the UvrC family. As to quaternary structure, interacts with UvrB in an incision complex.

The protein localises to the cytoplasm. The UvrABC repair system catalyzes the recognition and processing of DNA lesions. UvrC both incises the 5' and 3' sides of the lesion. The N-terminal half is responsible for the 3' incision and the C-terminal half is responsible for the 5' incision. The polypeptide is UvrABC system protein C (Anaplasma phagocytophilum (strain HZ)).